The primary structure comprises 229 residues: Large ribosomal subunit protein uL1 (229 aa).

It belongs to the universal ribosomal protein uL1 family. In terms of assembly, part of the 50S ribosomal subunit.

Binds directly to 23S rRNA. The L1 stalk is quite mobile in the ribosome, and is involved in E site tRNA release. In terms of biological role, protein L1 is also a translational repressor protein, it controls the translation of the L11 operon by binding to its mRNA. This is Large ribosomal subunit protein uL1 from Clostridium botulinum (strain 657 / Type Ba4).